A 391-amino-acid polypeptide reads, in one-letter code: 3-ketoacyl-CoA thiolase (391 aa).

The Acyl-thioester intermediate role is filled by Cys-95. Catalysis depends on proton acceptor residues His-347 and Cys-377.

This sequence belongs to the thiolase-like superfamily. Thiolase family. As to quaternary structure, heterotetramer of two alpha chains (FadB) and two beta chains (FadA).

The protein resides in the cytoplasm. The enzyme catalyses an acyl-CoA + acetyl-CoA = a 3-oxoacyl-CoA + CoA. It participates in lipid metabolism; fatty acid beta-oxidation. Functionally, catalyzes the final step of fatty acid oxidation in which acetyl-CoA is released and the CoA ester of a fatty acid two carbons shorter is formed. The polypeptide is 3-ketoacyl-CoA thiolase (Marinomonas sp. (strain MWYL1)).